The sequence spans 156 residues: SsrA-binding protein (156 aa).

It belongs to the SmpB family.

Its subcellular location is the cytoplasm. Its function is as follows. Required for rescue of stalled ribosomes mediated by trans-translation. Binds to transfer-messenger RNA (tmRNA), required for stable association of tmRNA with ribosomes. tmRNA and SmpB together mimic tRNA shape, replacing the anticodon stem-loop with SmpB. tmRNA is encoded by the ssrA gene; the 2 termini fold to resemble tRNA(Ala) and it encodes a 'tag peptide', a short internal open reading frame. During trans-translation Ala-aminoacylated tmRNA acts like a tRNA, entering the A-site of stalled ribosomes, displacing the stalled mRNA. The ribosome then switches to translate the ORF on the tmRNA; the nascent peptide is terminated with the 'tag peptide' encoded by the tmRNA and targeted for degradation. The ribosome is freed to recommence translation, which seems to be the essential function of trans-translation. This Clostridium tetani (strain Massachusetts / E88) protein is SsrA-binding protein.